A 276-amino-acid chain; its full sequence is Secreted LysM effector LysM10 (276 aa).

Residues 1–22 (MLLSLVKFGILSVFLLAQEAVA) form the signal peptide. Residues Asn27, Asn104, and Asn140 are each glycosylated (N-linked (GlcNAc...) asparagine). A LysM domain is found at 219–264 (KTYIAKEDDTCKSISEAQSISTDRLVEVNHLDYSCSSLTSGTALCI). Asn267 carries N-linked (GlcNAc...) asparagine glycosylation.

It belongs to the secreted LysM effector family.

It is found in the secreted. Its function is as follows. Secreted LysM effector that might have a role in sequestration of chitin oligosaccharides (breakdown products of fungal cell walls that are released during invasion and act as triggers of host immunity) to dampen host defense. The sequence is that of Secreted LysM effector LysM10 from Penicillium expansum (Blue mold rot fungus).